Consider the following 825-residue polypeptide: Probable phosphoketolase (825 aa).

This sequence belongs to the XFP family. Thiamine diphosphate is required as a cofactor.

The protein is Probable phosphoketolase of Schizosaccharomyces pombe (strain 972 / ATCC 24843) (Fission yeast).